Reading from the N-terminus, the 30-residue chain is Kappa-sparatoxin-Hv1b (30 aa).

3 disulfides stabilise this stretch: cysteine 3-cysteine 17, cysteine 10-cysteine 22, and cysteine 16-cysteine 26. At tryptophan 30 the chain carries Tryptophan amide.

This sequence belongs to the neurotoxin 10 (Hwtx-1) family. 19 (HpTX2) subfamily. Expressed by the venom gland.

The protein localises to the secreted. Functionally, inhibitor of voltage-gated potassium channels of the Kv4/KCND family. Inhibition of Kv4.3/KCND3 and Kv4.2/KCND2 is strongly voltage-dependent, while inhibition of Kv4.1/KCND1 shows less voltage-dependence. Its binding site may be near the potassium channel voltage sensor. Also blocks calcium channels. The protein is Kappa-sparatoxin-Hv1b of Heteropoda venatoria (Brown huntsman spider).